Consider the following 256-residue polypeptide: Pimeloyl-[acyl-carrier protein] methyl ester esterase (256 aa).

The region spanning 15-242 is the AB hydrolase-1 domain; it reads HLVLLHGWGL…AAHAPFISHP (228 aa). Residues tryptophan 22, 82–83, and 143–147 each bind substrate; these read SL and FLALQ. The active-site Nucleophile is the serine 82. Catalysis depends on residues aspartate 207 and histidine 235. Histidine 235 lines the substrate pocket.

It belongs to the AB hydrolase superfamily. Carboxylesterase BioH family. Monomer.

It localises to the cytoplasm. The enzyme catalyses 6-carboxyhexanoyl-[ACP] methyl ester + H2O = 6-carboxyhexanoyl-[ACP] + methanol + H(+). It participates in cofactor biosynthesis; biotin biosynthesis. The physiological role of BioH is to remove the methyl group introduced by BioC when the pimeloyl moiety is complete. It allows to synthesize pimeloyl-ACP via the fatty acid synthetic pathway through the hydrolysis of the ester bonds of pimeloyl-ACP esters. The sequence is that of Pimeloyl-[acyl-carrier protein] methyl ester esterase from Escherichia coli O6:H1 (strain CFT073 / ATCC 700928 / UPEC).